A 336-amino-acid chain; its full sequence is Zinc-type alcohol dehydrogenase-like protein SE_1777 (336 aa).

This sequence belongs to the zinc-containing alcohol dehydrogenase family. Quinone oxidoreductase subfamily.

This chain is Zinc-type alcohol dehydrogenase-like protein SE_1777, found in Staphylococcus epidermidis (strain ATCC 12228 / FDA PCI 1200).